Reading from the N-terminus, the 441-residue chain is Sec-independent protein translocase protein TatCo (441 aa).

The interval 1 to 185 (MADEERDAGL…LVGEAPESDQ (185 aa)) is disordered. Over residues 13-22 (ADDETDASDD) the composition is skewed to acidic residues. Over residues 51 to 62 (TPRDETVTHGSD) the composition is skewed to basic and acidic residues. The span at 75-104 (DNGDDSDSDTDAAPDDADDSATDSDADSDD) shows a compositional bias: acidic residues. A compositionally biased stretch (basic and acidic residues) spans 105-117 (EPRLLADDEHTSH). 2 stretches are compositionally biased toward acidic residues: residues 122–138 (TYDD…DPDA) and 164–173 (EDADFDDEDV). A run of 6 helical transmembrane segments spans residues 200 to 220 (LAVV…GADI), 276 to 296 (VAGL…TYLF), 317 to 337 (LVLA…AIFA), 357 to 377 (FNLI…PLFV), 395 to 415 (RLLF…DPTG), and 416 to 436 (MAPI…LAAL).

It belongs to the TatC family. In terms of assembly, forms a complex with TatA.

It is found in the cell membrane. Part of the twin-arginine translocation (Tat) system that transports large folded proteins containing a characteristic twin-arginine motif in their signal peptide across membranes. The sequence is that of Sec-independent protein translocase protein TatCo from Haloferax volcanii (strain ATCC 29605 / DSM 3757 / JCM 8879 / NBRC 14742 / NCIMB 2012 / VKM B-1768 / DS2) (Halobacterium volcanii).